A 157-amino-acid polypeptide reads, in one-letter code: 6,7-dimethyl-8-ribityllumazine synthase (157 aa).

Residues F23, A57–E59, and A81–I83 contribute to the 5-amino-6-(D-ribitylamino)uracil site. A86 to T87 contacts (2S)-2-hydroxy-3-oxobutyl phosphate. The Proton donor role is filled by H89. Residue F114 participates in 5-amino-6-(D-ribitylamino)uracil binding. R128 is a (2S)-2-hydroxy-3-oxobutyl phosphate binding site.

It belongs to the DMRL synthase family.

It carries out the reaction (2S)-2-hydroxy-3-oxobutyl phosphate + 5-amino-6-(D-ribitylamino)uracil = 6,7-dimethyl-8-(1-D-ribityl)lumazine + phosphate + 2 H2O + H(+). It functions in the pathway cofactor biosynthesis; riboflavin biosynthesis; riboflavin from 2-hydroxy-3-oxobutyl phosphate and 5-amino-6-(D-ribitylamino)uracil: step 1/2. Its function is as follows. Catalyzes the formation of 6,7-dimethyl-8-ribityllumazine by condensation of 5-amino-6-(D-ribitylamino)uracil with 3,4-dihydroxy-2-butanone 4-phosphate. This is the penultimate step in the biosynthesis of riboflavin. This is 6,7-dimethyl-8-ribityllumazine synthase from Desulforapulum autotrophicum (strain ATCC 43914 / DSM 3382 / VKM B-1955 / HRM2) (Desulfobacterium autotrophicum).